Consider the following 132-residue polypeptide: uncharacterized protein (132 aa).

This is an uncharacterized protein from Gallus gallus (Chicken).